Here is a 444-residue protein sequence, read N- to C-terminus: Protein phosphatase 2C homolog C10F6.17c (444 aa).

The 355-residue stretch at 85-439 folds into the PPM-type phosphatase domain; sequence RYDFNQVASN…DDITVTVIFF (355 aa). Mn(2+)-binding residues include Asp-121, Gly-122, and Asp-344.

Belongs to the PP2C family. It depends on Mg(2+) as a cofactor. The cofactor is Mn(2+).

It is found in the mitochondrion. It carries out the reaction O-phospho-L-seryl-[protein] + H2O = L-seryl-[protein] + phosphate. The enzyme catalyses O-phospho-L-threonyl-[protein] + H2O = L-threonyl-[protein] + phosphate. Functionally, involved in regulation of pyruvate dehydrogenase activity. The protein is Protein phosphatase 2C homolog C10F6.17c of Schizosaccharomyces pombe (strain 972 / ATCC 24843) (Fission yeast).